The sequence spans 235 residues: MNRDSRTALVLFSGGQDSTTCLAWALTRFAHVETLAFDYGQRHRIELDCRLTVLAQLREQFPDWAERLGADHLLDLSLLAQISDTALTTEREIELQANGLPNTFVPGRNLLFLGMAATLAYRRSASVLVGGMCETDYSGYPDCRDNTLKALQVALSLGLAAPMTIETPLMFLTKAQTWTLAEDLGGAPLVELITEHTHTCYLGERGQRHAWGHGCGHCPACELRHAGHAAWLGGR.

12 to 22 (FSGGQDSTTCL) provides a ligand contact to ATP. 4 residues coordinate Zn(2+): C200, C215, C218, and C221.

This sequence belongs to the QueC family. Zn(2+) is required as a cofactor.

It carries out the reaction 7-carboxy-7-deazaguanine + NH4(+) + ATP = 7-cyano-7-deazaguanine + ADP + phosphate + H2O + H(+). It functions in the pathway purine metabolism; 7-cyano-7-deazaguanine biosynthesis. Catalyzes the ATP-dependent conversion of 7-carboxy-7-deazaguanine (CDG) to 7-cyano-7-deazaguanine (preQ(0)). The protein is 7-cyano-7-deazaguanine synthase of Leptothrix cholodnii (strain ATCC 51168 / LMG 8142 / SP-6) (Leptothrix discophora (strain SP-6)).